Reading from the N-terminus, the 464-residue chain is Cysteine--tRNA ligase (464 aa).

Cys-32 is a binding site for Zn(2+). Residues Val-34–His-44 carry the 'HIGH' region motif. 3 residues coordinate Zn(2+): Cys-213, His-238, and Glu-242. The short motif at Lys-270–Ser-274 is the 'KMSKS' region element. Position 273 (Lys-273) interacts with ATP.

This sequence belongs to the class-I aminoacyl-tRNA synthetase family. In terms of assembly, monomer. The cofactor is Zn(2+).

It is found in the cytoplasm. The enzyme catalyses tRNA(Cys) + L-cysteine + ATP = L-cysteinyl-tRNA(Cys) + AMP + diphosphate. This chain is Cysteine--tRNA ligase, found in Francisella tularensis subsp. tularensis (strain SCHU S4 / Schu 4).